The primary structure comprises 58 residues: Photosystem II reaction center protein K (58 aa).

Positions 1-21 are excised as a propeptide; it reads MLAIFNIYLDNAFHLNGIILA. Residues 29-49 form a helical membrane-spanning segment; the sequence is IFDPIVDVMPIIPVFFFLLAF.

This sequence belongs to the PsbK family. As to quaternary structure, PSII is composed of 1 copy each of membrane proteins PsbA, PsbB, PsbC, PsbD, PsbE, PsbF, PsbH, PsbI, PsbJ, PsbK, PsbL, PsbM, PsbT, PsbX, PsbY, PsbZ, Psb30/Ycf12, at least 3 peripheral proteins of the oxygen-evolving complex and a large number of cofactors. It forms dimeric complexes.

It is found in the plastid. It localises to the chloroplast thylakoid membrane. In terms of biological role, one of the components of the core complex of photosystem II (PSII). PSII is a light-driven water:plastoquinone oxidoreductase that uses light energy to abstract electrons from H(2)O, generating O(2) and a proton gradient subsequently used for ATP formation. It consists of a core antenna complex that captures photons, and an electron transfer chain that converts photonic excitation into a charge separation. In Physcomitrium patens (Spreading-leaved earth moss), this protein is Photosystem II reaction center protein K.